A 161-amino-acid chain; its full sequence is MLHEAETWVAVAFVLMVALFIYFGAHRMIGEALDRRSARIRKELDDARQLKEEAQKLVAEYRSRRESAEREAQEIVAAAQADAERIAQEAKAKMEDFVARRTKAAESKIAQAETQAVADVRAAAAEAAAAAAANVLSQTVKGSIADNLIEKSIRELGGKLN.

The chain crosses the membrane as a helical span at residues 5–25 (AETWVAVAFVLMVALFIYFGA).

This sequence belongs to the ATPase B chain family. As to quaternary structure, F-type ATPases have 2 components, F(1) - the catalytic core - and F(0) - the membrane proton channel. F(1) has five subunits: alpha(3), beta(3), gamma(1), delta(1), epsilon(1). F(0) has three main subunits: a(1), b(2) and c(10-14). The alpha and beta chains form an alternating ring which encloses part of the gamma chain. F(1) is attached to F(0) by a central stalk formed by the gamma and epsilon chains, while a peripheral stalk is formed by the delta and b chains.

The protein resides in the cell inner membrane. Its function is as follows. F(1)F(0) ATP synthase produces ATP from ADP in the presence of a proton or sodium gradient. F-type ATPases consist of two structural domains, F(1) containing the extramembraneous catalytic core and F(0) containing the membrane proton channel, linked together by a central stalk and a peripheral stalk. During catalysis, ATP synthesis in the catalytic domain of F(1) is coupled via a rotary mechanism of the central stalk subunits to proton translocation. Functionally, component of the F(0) channel, it forms part of the peripheral stalk, linking F(1) to F(0). This is ATP synthase subunit b 1 from Afipia carboxidovorans (strain ATCC 49405 / DSM 1227 / KCTC 32145 / OM5) (Oligotropha carboxidovorans).